We begin with the raw amino-acid sequence, 481 residues long: Probable squalene synthase (481 aa).

Helical transmembrane passes span 294-314 (SVFN…ELVF) and 416-436 (FLVL…IGAA).

This sequence belongs to the phytoene/squalene synthase family. Mg(2+) serves as cofactor.

It is found in the endoplasmic reticulum membrane. The enzyme catalyses 2 (2E,6E)-farnesyl diphosphate + NADPH + H(+) = squalene + 2 diphosphate + NADP(+). It carries out the reaction 2 (2E,6E)-farnesyl diphosphate + NADH + H(+) = squalene + 2 diphosphate + NAD(+). It functions in the pathway terpene metabolism; lanosterol biosynthesis; lanosterol from farnesyl diphosphate: step 1/3. In terms of biological role, catalyzes the condensation of 2 two farnesyl pyrophosphate moieties to form squalene. It is the first committed enzyme of the sterol biosynthesis pathway. Required for the biosynthesis of ergosterol. The protein is Probable squalene synthase (erg-6) of Neurospora crassa (strain ATCC 24698 / 74-OR23-1A / CBS 708.71 / DSM 1257 / FGSC 987).